The following is a 448-amino-acid chain: 4-hydroxybenzoate transporter PcaK (448 aa).

Residues M1 to I30 are Cytoplasmic-facing. A helical transmembrane segment spans residues V31 to I51. Over A52–G67 the chain is Periplasmic. The chain crosses the membrane as a helical span at residues P68–A88. At D89–K94 the chain is on the cytoplasmic side. The helical transmembrane segment at L95–T115 threads the bilayer. Topologically, residues N116–Q119 are periplasmic. A helical membrane pass occupies residues L120–T140. At L141 to S152 the chain is on the cytoplasmic side. A helical transmembrane segment spans residues L153–S173. The Periplasmic portion of the chain corresponds to A174–S184. Residues L185–P205 traverse the membrane as a helical segment. Residues E206–Y261 are Cytoplasmic-facing. The chain crosses the membrane as a helical span at residues S262–L282. Over T283–A301 the chain is Periplasmic. Residues F302–M322 traverse the membrane as a helical segment. Residues D323–K329 are Cytoplasmic-facing. The chain crosses the membrane as a helical span at residues V330–G350. Residue Q351 is a topological domain, periplasmic. The helical transmembrane segment at V352–A372 threads the bilayer. Topologically, residues M373–R398 are cytoplasmic. Residues F399 to E419 traverse the membrane as a helical segment. Topologically, residues Q420–V421 are periplasmic. The helical transmembrane segment at L422 to V442 threads the bilayer. At S443–G448 the chain is on the cytoplasmic side.

The protein belongs to the major facilitator superfamily. Aromatic acid:H(+) symporter (AAHS) (TC 2.A.1.15) family.

The protein localises to the cell inner membrane. Its function is as follows. Transports 4-hydroxybenzoate (4-HBA) and protocatechuate across the membrane. Driven by the proton motive force. Also functions as a chemoreceptor, which is required for chemotaxis to aromatic acids. The sequence is that of 4-hydroxybenzoate transporter PcaK (pcaK) from Pseudomonas aeruginosa (strain ATCC 15692 / DSM 22644 / CIP 104116 / JCM 14847 / LMG 12228 / 1C / PRS 101 / PAO1).